The chain runs to 149 residues: Ribosome-binding factor A (149 aa).

A compositionally biased stretch (basic and acidic residues) spans 116-125 (TLFEELHPNP). The segment at 116–149 (TLFEELHPNPEEDDGDTDAETLLEDSESGIERET) is disordered. Residues 126 to 143 (EEDDGDTDAETLLEDSES) are compositionally biased toward acidic residues.

This sequence belongs to the RbfA family. As to quaternary structure, monomer. Binds 30S ribosomal subunits, but not 50S ribosomal subunits or 70S ribosomes.

The protein localises to the cytoplasm. In terms of biological role, one of several proteins that assist in the late maturation steps of the functional core of the 30S ribosomal subunit. Associates with free 30S ribosomal subunits (but not with 30S subunits that are part of 70S ribosomes or polysomes). Required for efficient processing of 16S rRNA. May interact with the 5'-terminal helix region of 16S rRNA. This chain is Ribosome-binding factor A, found in Leptospira biflexa serovar Patoc (strain Patoc 1 / Ames).